A 321-amino-acid polypeptide reads, in one-letter code: Methionyl-tRNA formyltransferase (321 aa).

112–115 (GLLP) contributes to the (6S)-5,6,7,8-tetrahydrofolate binding site.

This sequence belongs to the Fmt family.

The enzyme catalyses L-methionyl-tRNA(fMet) + (6R)-10-formyltetrahydrofolate = N-formyl-L-methionyl-tRNA(fMet) + (6S)-5,6,7,8-tetrahydrofolate + H(+). Its function is as follows. Attaches a formyl group to the free amino group of methionyl-tRNA(fMet). The formyl group appears to play a dual role in the initiator identity of N-formylmethionyl-tRNA by promoting its recognition by IF2 and preventing the misappropriation of this tRNA by the elongation apparatus. This chain is Methionyl-tRNA formyltransferase, found in Chlamydia caviae (strain ATCC VR-813 / DSM 19441 / 03DC25 / GPIC) (Chlamydophila caviae).